We begin with the raw amino-acid sequence, 430 residues long: Putative aspergillopepsin A-like aspartic endopeptidase MCYG_07979 (430 aa).

The N-terminal stretch at 1 to 17 (MHLSSLLVAVLLPLALS) is a signal peptide. Residues 18–87 (KPTPRKKPGS…SKIAGGAPGA (70 aa)) constitute a propeptide, activation peptide. Residues 59–105 (STQGMDGYRPEPISRFQGNSKIAGGAPGAKDDGKDEKGEVENNPTSH) are disordered. Residues 87–98 (AKDDGKDEKGEV) show a composition bias toward basic and acidic residues. The region spanning 109–427 (FLSPVTIGGQ…DYRGPSVSLA (319 aa)) is the Peptidase A1 domain. Residue D125 is part of the active site. N-linked (GlcNAc...) asparagine glycosylation occurs at N306. D314 is a catalytic residue. N352 carries N-linked (GlcNAc...) asparagine glycosylation.

The protein belongs to the peptidase A1 family.

Its subcellular location is the secreted. The sequence is that of Putative aspergillopepsin A-like aspartic endopeptidase MCYG_07979 from Arthroderma otae (strain ATCC MYA-4605 / CBS 113480) (Microsporum canis).